The sequence spans 333 residues: Succinylglutamate desuccinylase (333 aa).

His56, Glu59, and His149 together coordinate Zn(2+). Residue Glu214 is part of the active site.

Belongs to the AspA/AstE family. Succinylglutamate desuccinylase subfamily. Requires Zn(2+) as cofactor.

The catalysed reaction is N-succinyl-L-glutamate + H2O = L-glutamate + succinate. It functions in the pathway amino-acid degradation; L-arginine degradation via AST pathway; L-glutamate and succinate from L-arginine: step 5/5. Transforms N(2)-succinylglutamate into succinate and glutamate. This Chromobacterium violaceum (strain ATCC 12472 / DSM 30191 / JCM 1249 / CCUG 213 / NBRC 12614 / NCIMB 9131 / NCTC 9757 / MK) protein is Succinylglutamate desuccinylase.